We begin with the raw amino-acid sequence, 462 residues long: Flavin-containing monooxygenase FMO GS-OX3 (462 aa).

17–22 (GAGPAG) contributes to the FAD binding site. 212–217 (GNFASG) contacts NADP(+). The helical transmembrane segment at 318–338 (ALAPGLAFVGLPAMGIVFVMF) threads the bilayer.

This sequence belongs to the FMO family.

It is found in the membrane. The enzyme catalyses a (Z)-omega-(methylsulfanyl)-N-sulfo-alkylhydroximate S-glucoside + NADPH + O2 + H(+) = a (Z)-omega-(methylsulfinyl)-alkyl-glucosinolate + NADP(+) + H2O. Functionally, catalyzes the conversion of methylthioalkyl glucosinolates of any chain length into methylsulfinylalkyl glucosinolates. Prefers probably short-chain methylthioalkyl glucosinolates in cv. Landsberg erecta. The sequence is that of Flavin-containing monooxygenase FMO GS-OX3 (FMOGS-OX3) from Arabidopsis thaliana (Mouse-ear cress).